The chain runs to 424 residues: Arogenate dehydratase 3, chloroplastic (424 aa).

The transit peptide at 1-24 (MRTLLPSHTPATVTTAARRRHVIH) directs the protein to the chloroplast. The span at 57-71 (EQSESLSSNSNGSSS) shows a compositional bias: low complexity. The tract at residues 57-77 (EQSESLSSNSNGSSSYHVSAV) is disordered. In terms of domain architecture, Prephenate dehydratase spans 122-299 (RVAYQGVPGA…NVTRFVMLAR (178 aa)). Residues 313-404 (SIVFAHEKGT…SFLRVLGSYP (92 aa)) enclose the ACT domain.

In terms of assembly, may interact with GPA1. In terms of tissue distribution, expressed in roots, leaves, stems, flowers and siliques.

It is found in the plastid. The protein resides in the chloroplast stroma. The catalysed reaction is L-arogenate + H(+) = L-phenylalanine + CO2 + H2O. The protein operates within amino-acid biosynthesis; L-phenylalanine biosynthesis; L-phenylalanine from L-arogenate: step 1/1. Converts the prephenate produced from the shikimate-chorismate pathway into phenylalanine. Together with GCR1 and GPA1, required for blue light-mediated synthesis of phenylpyruvate and subsequently of phenylalanine (Phe), in etiolated seedlings. In Arabidopsis thaliana (Mouse-ear cress), this protein is Arogenate dehydratase 3, chloroplastic.